We begin with the raw amino-acid sequence, 158 residues long: Sec-independent protein translocase protein TatB (158 aa).

A helical membrane pass occupies residues 1–21; the sequence is MFGISFSELLLVGLVALLVLG. Residues 73–158 form a disordered region; that stretch reads DEARKMFAPN…HDSSLPPRAP (86 aa). Residues 80-90 are compositionally biased toward low complexity; it reads APNQPSENSPE.

It belongs to the TatB family. The Tat system comprises two distinct complexes: a TatABC complex, containing multiple copies of TatA, TatB and TatC subunits, and a separate TatA complex, containing only TatA subunits. Substrates initially bind to the TatABC complex, which probably triggers association of the separate TatA complex to form the active translocon.

Its subcellular location is the cell inner membrane. In terms of biological role, part of the twin-arginine translocation (Tat) system that transports large folded proteins containing a characteristic twin-arginine motif in their signal peptide across membranes. Together with TatC, TatB is part of a receptor directly interacting with Tat signal peptides. TatB may form an oligomeric binding site that transiently accommodates folded Tat precursor proteins before their translocation. The sequence is that of Sec-independent protein translocase protein TatB from Pseudomonas syringae pv. syringae (strain B728a).